The chain runs to 735 residues: Disintegrin and metalloproteinase domain-containing protein 2 (735 aa).

A signal peptide spans 1–16; that stretch reads MWRVLFLLSGLGGLRM. The propeptide occupies 17-174; that stretch reads DSNFDSLPVQ…FKLQSVEPQQ (158 aa). N122 and N220 each carry an N-linked (GlcNAc...) asparagine glycan. The Extracellular portion of the chain corresponds to 175–686; it reads DFAKYIEMHV…ENIYHSKPMR (512 aa). Positions 178-375 constitute a Peptidase M12B domain; it reads KYIEMHVIVE…QKSQCLHNQP (198 aa). Disulfide bonds link C287–C370, C329–C354, C331–C336, and C445–C465. N-linked (GlcNAc...) asparagine glycans are attached at residues N353, N459, and N566. The Disintegrin domain occupies 384–473; sequence QAVCGNAKLE…SCPENHYVQT (90 aa). In terms of domain architecture, EGF-like spans 612–645; that stretch reads LGYDCTTDKCNDRGVCNNKKHCHCSASYLPPDCS. Cystine bridges form between C616–C627, C621–C633, and C635–C644. The chain crosses the membrane as a helical span at residues 687–707; it reads WPFFLFIPFFIIFCVLIAIMV. Over 708–735 the chain is Cytoplasmic; sequence KVNFQRKKWRTEDYSSDEQPESESEPKG. A Phosphoserine modification is found at S729.

In terms of processing, the prodomain and the metalloprotease domain are cleaved during the epididymal maturation of the spermatozoa. In terms of tissue distribution, expressed specifically in spermatogenic cells in the seminiferous cells. Not detected in fetal tissues.

It is found in the membrane. In terms of biological role, sperm surface membrane protein that may be involved in sperm-egg plasma membrane adhesion and fusion during fertilization. Could have a direct role in sperm-zona binding or migration of sperm from the uterus into the oviduct. Interactions with egg membrane could be mediated via binding between its disintegrin-like domain to one or more integrins receptors on the egg. This is a non catalytic metalloprotease-like protein. This chain is Disintegrin and metalloproteinase domain-containing protein 2 (ADAM2), found in Homo sapiens (Human).